A 118-amino-acid chain; its full sequence is Large ribosomal subunit protein uL18 (118 aa).

Belongs to the universal ribosomal protein uL18 family. As to quaternary structure, part of the 50S ribosomal subunit; part of the 5S rRNA/L5/L18/L25 subcomplex. Contacts the 5S and 23S rRNAs.

In terms of biological role, this is one of the proteins that bind and probably mediate the attachment of the 5S RNA into the large ribosomal subunit, where it forms part of the central protuberance. The polypeptide is Large ribosomal subunit protein uL18 (Sulfurovum sp. (strain NBC37-1)).